The following is an 848-amino-acid chain: Dynein axonemal intermediate chain 4 (848 aa).

2 disordered regions span residues 345-370 and 431-464; these read SKAN…SETS and EPEP…IHAE. The segment covering 359 to 370 has biased composition (polar residues); that stretch reads PGSTTEKNSETS. Positions 442–456 are enriched in basic and acidic residues; that stretch reads ESAKHEEVEEESKKE. WD repeat units follow at residues 534–574, 583–631, 658–698, 702–742, 745–784, and 790–829; these read QSPY…NVPV, KHLG…DCYD, SRQA…QYLD, GHKG…PSLS, PATS…LDPL, and NPGI…TVLE.

In terms of assembly, part of the multisubunit axonemal dynein complex formed at least of two heavy chains and a number of intermediate and light chains. Associated with axonemal dynein subunits such as, DNAH2, DNAI3, and DYNLT1. Interacts with DYNLT1.

The protein resides in the cytoplasm. It localises to the cytoskeleton. Its subcellular location is the flagellum axoneme. It is found in the cilium axoneme. The protein localises to the dynein axonemal particle. Its function is as follows. Plays a critical role in the assembly of axonemal dynein complex, thereby playing a role in ciliary motility. This chain is Dynein axonemal intermediate chain 4, found in Homo sapiens (Human).